Consider the following 789-residue polypeptide: Protein FLOWERING LOCUS D (789 aa).

The disordered stretch occupies residues 1 to 23 (MVSFSAPKKRRRGRSQRSMSSLN). Residues 76 to 177 (NKEATTEALL…FGIAQAIKDK (102 aa)) form the SWIRM domain. FAD is bound by residues Ser-195, Glu-214, Arg-216, Arg-222, and 240 to 243 (GGSV). Lys-287 is covalently cross-linked (Glycyl lysine isopeptide (Lys-Gly) (interchain with G-Cter in SUMO)). FAD-binding positions include Glu-595, 604 to 605 (TM), and 607 to 612 (GAFVTG). Residues Lys-693 and Lys-770 each participate in a glycyl lysine isopeptide (Lys-Gly) (interchain with G-Cter in SUMO) cross-link.

The protein belongs to the flavin monoamine oxidase family. As to quaternary structure, interacts with HDA6. It depends on FAD as a cofactor. Sumoylated at Lys-287, Lys-693 and Lys-770 by SIZ1. Sumoylation alters its activity and the histone H4 acetylation status of FLC locus, promoting FLC expression.

Functionally, probable histone demethylase that promotes flowering independently of the photoperiod and vernalization pathways by repressing FLOWERING LOCUS C (FLC), a floral repressor that blocks the transition from vegetative to reproductive development. Probably mediates histone H3 'Lys-4' demethylation at FLC locus. Seems to act in partial redundancy with LDL1 and LDL2 to repress FLC expression. Required for histone H4 deacetylation of FLC locus. May be a component of the histone deacetylase complex. Forms a histone deacetylase complex with HDA5, HDA6 and MSI4/FVE that represses FLC gene expression to control flowering time. Required for systemic acquired resistance (SAR) toward pathogenic bacteria (e.g. Pseudomonas syringae pv tomato DC3000 (avrPto)). Together with FLD and MSI4/FVE, contributes to dehydroabietinal-dependent (DA, a diterpenoid tricyclic diterpene) activation of flowering ans SAR. The polypeptide is Protein FLOWERING LOCUS D (Arabidopsis thaliana (Mouse-ear cress)).